We begin with the raw amino-acid sequence, 210 residues long: MVGPSRLAGGGLLLLLLALLPVALDGKPAPPSQALHKAPAGGTKASQIMQVLLPESKKSWAARDRMVGPYNPAGGGGGHPSSCFGHKIDRISHSSGMGCGRRPNAPAGGTKASQIMQVLLPESKKSRAARDRMVGPDNRAGGGGGGGGGDSSRQQELAKKDQHNNCFGRRIDRISHSTDLGCRRRPNPPPAPTAAPLAVAQFNSKSSQVA.

Residues 1–26 (MVGPSRLAGGGLLLLLLALLPVALDG) form the signal peptide. The interval 83–99 (CFGHKIDRISHSSGMGC) is natriuretic peptide domain 1. C83 and C99 are joined by a disulfide. Over residues 122–134 (ESKKSRAARDRMV) the composition is skewed to basic and acidic residues. Residues 122–210 (ESKKSRAARD…QFNSKSSQVA (89 aa)) are disordered. Gly residues predominate over residues 140–150 (AGGGGGGGGGD). Basic and acidic residues predominate over residues 156 to 176 (ELAKKDQHNNCFGRRIDRISH). A natriuretic peptide domain 2 region spans residues 166–182 (CFGRRIDRISHSTDLGC). Cysteines 166 and 182 form a disulfide. Over residues 201-210 (QFNSKSSQVA) the composition is skewed to polar residues.

It belongs to the natriuretic peptide family. Expressed by the venom gland.

The protein resides in the secreted. In terms of biological role, natriuretic peptide that dose-dependently induces the rapid relaxation of rat aortic strips phenylephrine-precontracted. Acts by stimulating cGMP production in a dose-dependent manner (by probably activating NPR1 and/or NPR2). May also show potent hypotensive effects. The protein is Natriuretic peptide BM026 of Bungarus multicinctus (Many-banded krait).